The following is a 118-amino-acid chain: Thioredoxin-like protein CXXS1 (118 aa).

Positions 2 to 110 (ARVVKIDSAE…IKKRVDGFVQ (109 aa)) constitute a Thioredoxin domain.

It belongs to the thioredoxin family. As to expression, ubiquitous.

It is found in the cytoplasm. Possesses low disulfide reductase activity, but efficient protein disulfide isomerase activity. Does not possess deglutathionylation activity. This chain is Thioredoxin-like protein CXXS1 (CXXS1), found in Arabidopsis thaliana (Mouse-ear cress).